A 632-amino-acid chain; its full sequence is MEQDNLYNLLQSIDTPDDLRHLSADKLPEVCKELRQKIIDELSCNPGHFGSSLGVIELTVALHYVFNTPYDRIVWDVGHQAYGHKILTGRRDAFCTNRKLNGIRPFPSPSESEYDTFTCGHASNSISAALGMAVAAKKHGENNRHVVAVIGDGSMSGGLAFEGLNNASATPNNLLIILNDNNMAIDRSVGGMKQYLLNLQMSEGYNRIRYKISQMFHRWGILNEERRKSLIRFNNSLKSMLVQQQNVFEGMNIRYFGPIDGHDVNNLARVLKEIKDMQGPKLLHIHTTKGKGFGPAEKAATIWHAPGIFDKETGERIVVDTKGMPPLFQDVFGNTLLELAQTNDKIVGVTPAMPSGCSMNILMKAMPERGFDVGIAEGHAVTFSGGMAKDGLLPFCNIYSSFMQRAYDNVIHDIAIQKLNVVLCLDRAGLVGEDGPTHHGAFDLAYMRPIPNLIVASPYNEHELRCLMYTAQLPDKGPFVIRYPRGRGSLVDWKCPMQEIEIGKGRKLKEGKDIAVITLGPIGVQAEKAITHAEQETGKSIAHYDLRFLKPLDESMLHEIGKRFKQVVTVEDGVLKGGMGSAILEFMADNEYNPQIKRIGLPDQFVQHGSVKELYHICGMDEEGIYKVLISF.

Thiamine diphosphate is bound by residues His-79 and 120-122 (GHA). A Mg(2+)-binding site is contributed by Asp-152. Thiamine diphosphate-binding positions include 153-154 (GS), Asn-181, Phe-293, and Glu-377. Position 181 (Asn-181) interacts with Mg(2+).

The protein belongs to the transketolase family. DXPS subfamily. Homodimer. Mg(2+) serves as cofactor. Requires thiamine diphosphate as cofactor.

The enzyme catalyses D-glyceraldehyde 3-phosphate + pyruvate + H(+) = 1-deoxy-D-xylulose 5-phosphate + CO2. It functions in the pathway metabolic intermediate biosynthesis; 1-deoxy-D-xylulose 5-phosphate biosynthesis; 1-deoxy-D-xylulose 5-phosphate from D-glyceraldehyde 3-phosphate and pyruvate: step 1/1. Its function is as follows. Catalyzes the acyloin condensation reaction between C atoms 2 and 3 of pyruvate and glyceraldehyde 3-phosphate to yield 1-deoxy-D-xylulose-5-phosphate (DXP). The sequence is that of 1-deoxy-D-xylulose-5-phosphate synthase from Phocaeicola vulgatus (strain ATCC 8482 / DSM 1447 / JCM 5826 / CCUG 4940 / NBRC 14291 / NCTC 11154) (Bacteroides vulgatus).